Here is a 122-residue protein sequence, read N- to C-terminus: Large ribosomal subunit protein uL14 (122 aa).

The protein belongs to the universal ribosomal protein uL14 family. In terms of assembly, part of the 50S ribosomal subunit. Forms a cluster with proteins L3 and L19. In the 70S ribosome, L14 and L19 interact and together make contacts with the 16S rRNA in bridges B5 and B8.

Binds to 23S rRNA. Forms part of two intersubunit bridges in the 70S ribosome. The chain is Large ribosomal subunit protein uL14 from Campylobacter lari (strain RM2100 / D67 / ATCC BAA-1060).